A 787-amino-acid chain; its full sequence is Mitochondrial 15S rRNA processing factor CCM1 (787 aa).

Residues 1–12 (MMLRLSVKKRCM) constitute a mitochondrion transit peptide. The segment covering 38–48 (QKGKPTLRKSK) has biased composition (basic residues). Residues 38–58 (QKGKPTLRKSKGSNDGGAVNN) are disordered. PPR repeat units lie at residues 286 to 320 (SRET…KLEP), 321 to 356 (SQKT…SQKT), and 359 to 393 (DTRA…KIEI).

The protein belongs to the CCM1 family. Binds to mitochondrial small subunit 15S rRNA.

The protein resides in the mitochondrion. Functionally, regulates mitochondrial small subunit maturation by controlling 15S rRNA 5'-end processing. Localizes to the 5' precursor of the 15S rRNA in a position that is subsequently occupied by mS47 in the mature yeast mtSSU. Uses structure and sequence-specific RNA recognition, binding to a single-stranded region of the precursor and specifically recognizing bases -6 to -1. The exchange of Ccm1 for mS47 is coupled to the irreversible removal of precursor rRNA that is accompanied by conformational changes of the mitoribosomal proteins uS5m and mS26. These conformational changes signal completion of 5'-end rRNA processing through protection of the mature 5'-end of the 15S rRNA and stabilization of mS47. The removal of the 5' precursor together with the dissociation of Ccm1 may be catalyzed by the 5'-3' exoribonuclease Pet127. Involved in the specific removal of group I introns in mitochondrial encoded transcripts. This Debaryomyces hansenii (strain ATCC 36239 / CBS 767 / BCRC 21394 / JCM 1990 / NBRC 0083 / IGC 2968) (Yeast) protein is Mitochondrial 15S rRNA processing factor CCM1 (CCM1).